We begin with the raw amino-acid sequence, 166 residues long: Lipoprotein signal peptidase (166 aa).

3 helical membrane-spanning segments follow: residues 12-32 (WLWLVVVVLIIDLGSKYLILQ), 70-90 (WFFAGIAIGICVILLVMMYRS), and 102-122 (ALIIGGALGNLFDRLWHGFVV). Active-site residues include aspartate 123 and aspartate 141. A helical transmembrane segment spans residues 137–157 (FNLADSAICIGAALIVLEGFL).

The protein belongs to the peptidase A8 family.

It is found in the cell inner membrane. It catalyses the reaction Release of signal peptides from bacterial membrane prolipoproteins. Hydrolyzes -Xaa-Yaa-Zaa-|-(S,diacylglyceryl)Cys-, in which Xaa is hydrophobic (preferably Leu), and Yaa (Ala or Ser) and Zaa (Gly or Ala) have small, neutral side chains.. It functions in the pathway protein modification; lipoprotein biosynthesis (signal peptide cleavage). Its function is as follows. This protein specifically catalyzes the removal of signal peptides from prolipoproteins. This chain is Lipoprotein signal peptidase, found in Salmonella choleraesuis (strain SC-B67).